Reading from the N-terminus, the 336-residue chain is Spore photoproduct lyase (336 aa).

Residues 74-305 (CKPSANYQLP…KFGQFGYGKY (232 aa)) form the Radical SAM core domain. Residues cysteine 88, cysteine 92, and cysteine 95 each contribute to the [4Fe-4S] cluster site. The segment at residues 215–232 (ESAYNILNSGYKTGFIVG) is a DNA-binding region (H-T-H motif).

It belongs to the radical SAM superfamily. SPL family. As to quaternary structure, monomer or homodimer. [4Fe-4S] cluster is required as a cofactor. S-adenosyl-L-methionine serves as cofactor.

The catalysed reaction is (5R)-5,6-dihydro-5-(thymidin-7-yl)thymidine in DNA = a thymidine dimer in DNA. Its function is as follows. Involved in repair of UV radiation-induced DNA damage during spore germination. Can repair thymine dimer 5-thyminyl-5,6-dihydrothymine (known as spore photoproduct (SP)) by in situ monomerization of SP to two thymines. The sequence is that of Spore photoproduct lyase (splB) from Clostridium acetobutylicum (strain ATCC 824 / DSM 792 / JCM 1419 / IAM 19013 / LMG 5710 / NBRC 13948 / NRRL B-527 / VKM B-1787 / 2291 / W).